Consider the following 186-residue polypeptide: Threonylcarbamoyl-AMP synthase (186 aa).

Residues 5 to 186 (TQSINDAVKC…DAITGEILRL (182 aa)) form the YrdC-like domain.

The protein belongs to the SUA5 family. TsaC subfamily.

The protein resides in the cytoplasm. It catalyses the reaction L-threonine + hydrogencarbonate + ATP = L-threonylcarbamoyladenylate + diphosphate + H2O. Its function is as follows. Required for the formation of a threonylcarbamoyl group on adenosine at position 37 (t(6)A37) in tRNAs that read codons beginning with adenine. Catalyzes the conversion of L-threonine, HCO(3)(-)/CO(2) and ATP to give threonylcarbamoyl-AMP (TC-AMP) as the acyladenylate intermediate, with the release of diphosphate. The sequence is that of Threonylcarbamoyl-AMP synthase from Coxiella burnetii (strain RSA 331 / Henzerling II).